The sequence spans 159 residues: Peptide deformylase (159 aa).

Residues cysteine 88 and histidine 130 each contribute to the Fe cation site. Glutamate 131 is a catalytic residue. Position 134 (histidine 134) interacts with Fe cation.

The protein belongs to the polypeptide deformylase family. Requires Fe(2+) as cofactor.

It catalyses the reaction N-terminal N-formyl-L-methionyl-[peptide] + H2O = N-terminal L-methionyl-[peptide] + formate. In terms of biological role, removes the formyl group from the N-terminal Met of newly synthesized proteins. Requires at least a dipeptide for an efficient rate of reaction. N-terminal L-methionine is a prerequisite for activity but the enzyme has broad specificity at other positions. The protein is Peptide deformylase of Caldanaerobacter subterraneus subsp. tengcongensis (strain DSM 15242 / JCM 11007 / NBRC 100824 / MB4) (Thermoanaerobacter tengcongensis).